Here is a 156-residue protein sequence, read N- to C-terminus: Ribosomal RNA large subunit methyltransferase H (156 aa).

S-adenosyl-L-methionine contacts are provided by residues Leu73, Gly104, and 123-128; that span reads LSKLTL.

It belongs to the RNA methyltransferase RlmH family. In terms of assembly, homodimer.

The protein localises to the cytoplasm. The enzyme catalyses pseudouridine(1915) in 23S rRNA + S-adenosyl-L-methionine = N(3)-methylpseudouridine(1915) in 23S rRNA + S-adenosyl-L-homocysteine + H(+). Specifically methylates the pseudouridine at position 1915 (m3Psi1915) in 23S rRNA. The polypeptide is Ribosomal RNA large subunit methyltransferase H (Idiomarina loihiensis (strain ATCC BAA-735 / DSM 15497 / L2-TR)).